Reading from the N-terminus, the 406-residue chain is 4-hydroxy-3-methylbut-2-en-1-yl diphosphate synthase (ferredoxin) (406 aa).

The [4Fe-4S] cluster site is built by cysteine 315, cysteine 318, cysteine 349, and glutamate 356.

This sequence belongs to the IspG family. It depends on [4Fe-4S] cluster as a cofactor.

It carries out the reaction (2E)-4-hydroxy-3-methylbut-2-enyl diphosphate + 2 oxidized [2Fe-2S]-[ferredoxin] + H2O = 2-C-methyl-D-erythritol 2,4-cyclic diphosphate + 2 reduced [2Fe-2S]-[ferredoxin] + H(+). Its pathway is isoprenoid biosynthesis; isopentenyl diphosphate biosynthesis via DXP pathway; isopentenyl diphosphate from 1-deoxy-D-xylulose 5-phosphate: step 5/6. Converts 2C-methyl-D-erythritol 2,4-cyclodiphosphate (ME-2,4cPP) into 1-hydroxy-2-methyl-2-(E)-butenyl 4-diphosphate. The sequence is that of 4-hydroxy-3-methylbut-2-en-1-yl diphosphate synthase (ferredoxin) from Rippkaea orientalis (strain PCC 8801 / RF-1) (Cyanothece sp. (strain PCC 8801)).